A 215-amino-acid chain; its full sequence is Ribosomal RNA small subunit methyltransferase G (215 aa).

S-adenosyl-L-methionine contacts are provided by residues Gly-82, Met-87, 133-134, and Arg-148; that span reads VE.

The protein belongs to the methyltransferase superfamily. RNA methyltransferase RsmG family.

It is found in the cytoplasm. The enzyme catalyses guanosine(527) in 16S rRNA + S-adenosyl-L-methionine = N(7)-methylguanosine(527) in 16S rRNA + S-adenosyl-L-homocysteine. In terms of biological role, specifically methylates the N7 position of guanine in position 527 of 16S rRNA. In Stutzerimonas stutzeri (strain A1501) (Pseudomonas stutzeri), this protein is Ribosomal RNA small subunit methyltransferase G.